The following is a 110-amino-acid chain: V-type proton ATPase subunit F (110 aa).

Belongs to the V-ATPase F subunit family. As to quaternary structure, V-ATPase is a heteromultimeric enzyme made up of two complexes: the ATP-hydrolytic V1 complex and the proton translocation V0 complex. The V1 complex consists of three catalytic AB heterodimers that form a heterohexamer, three peripheral stalks each consisting of EG heterodimers, one central rotor including subunits D and F, and the regulatory subunits C and H. The proton translocation complex V0 consists of the proton transport subunit a, a ring of proteolipid subunits c9c'', rotary subunit d, subunits e and f, and two accessory subunits.

Subunit of the V1 complex of vacuolar(H+)-ATPase (V-ATPase), a multisubunit enzyme composed of a peripheral complex (V1) that hydrolyzes ATP and a membrane integral complex (V0) that translocates protons. V-ATPase is responsible for acidifying and maintaining the pH of intracellular compartments and in some cell types, is targeted to the plasma membrane, where it is responsible for acidifying the extracellular environment. This chain is V-type proton ATPase subunit F (atp6s14), found in Xenopus laevis (African clawed frog).